The primary structure comprises 252 residues: Ditrans,polycis-undecaprenyl-diphosphate synthase ((2E,6E)-farnesyl-diphosphate specific) (252 aa).

D25 is an active-site residue. D25 serves as a coordination point for Mg(2+). Substrate is bound by residues 26-29 (GNGR), W30, R38, H42, and 70-72 (SSE). N73 acts as the Proton acceptor in catalysis. W74, R76, and R193 together coordinate substrate. H198 contributes to the Mg(2+) binding site. 199 to 201 (RIS) contacts substrate. Residue E212 participates in Mg(2+) binding.

It belongs to the UPP synthase family. In terms of assembly, homodimer. The cofactor is Mg(2+).

The catalysed reaction is 8 isopentenyl diphosphate + (2E,6E)-farnesyl diphosphate = di-trans,octa-cis-undecaprenyl diphosphate + 8 diphosphate. Functionally, catalyzes the sequential condensation of isopentenyl diphosphate (IPP) with (2E,6E)-farnesyl diphosphate (E,E-FPP) to yield (2Z,6Z,10Z,14Z,18Z,22Z,26Z,30Z,34E,38E)-undecaprenyl diphosphate (di-trans,octa-cis-UPP). UPP is the precursor of glycosyl carrier lipid in the biosynthesis of bacterial cell wall polysaccharide components such as peptidoglycan and lipopolysaccharide. The protein is Ditrans,polycis-undecaprenyl-diphosphate synthase ((2E,6E)-farnesyl-diphosphate specific) of Salmonella paratyphi A (strain ATCC 9150 / SARB42).